Consider the following 158-residue polypeptide: Succinate dehydrogenase [ubiquinone] cytochrome b small subunit, mitochondrial (158 aa).

The transit peptide at 1–55 directs the protein to the mitochondrion; it reads MALWRLSVLCGAREGRALFLRTPVVRPALVSAFLQDRPAQGWCGTQHIHLSPSHH. The Mitochondrial matrix segment spans residues 56–62; it reads SGSKAAS. The helical transmembrane segment at 63 to 84 threads the bilayer; sequence LHWTGERVVSVLLLGLIPAAYL. The Mitochondrial intermembrane portion of the chain corresponds to 85 to 89; that stretch reads NPCSA. Residues 90–110 form a helical membrane-spanning segment; that stretch reads MDYSLAATLTLHSHWGIGQVV. His101 serves as a coordination point for heme b. At 111–119 the chain is on the mitochondrial matrix side; that stretch reads TDYVHGDAV. Tyr113 contributes to the a ubiquinone binding site. Residues 120 to 141 traverse the membrane as a helical segment; that stretch reads QKAAKTGLLVLSAFTFAGLCYF. Topologically, residues 142–158 are mitochondrial intermembrane; sequence NYHDVGICKAVAMLWKL.

The protein belongs to the CybS family. Component of complex II composed of four subunits: the flavoprotein (FP) SDHA, iron-sulfur protein (IP) SDHB, and a cytochrome b560 composed of SDHC and SDHD.

The protein localises to the mitochondrion inner membrane. It functions in the pathway carbohydrate metabolism; tricarboxylic acid cycle. Functionally, membrane-anchoring subunit of succinate dehydrogenase (SDH) that is involved in complex II of the mitochondrial electron transport chain and is responsible for transferring electrons from succinate to ubiquinone (coenzyme Q). SDH also oxidizes malate to the non-canonical enol form of oxaloacetate, enol-oxaloacetate. Enol-oxaloacetate, which is a potent inhibitor of the succinate dehydrogenase activity, is further isomerized into keto-oxaloacetate. The protein is Succinate dehydrogenase [ubiquinone] cytochrome b small subunit, mitochondrial (SDHD) of Bos taurus (Bovine).